A 172-amino-acid chain; its full sequence is ATP synthase subunit b, chloroplastic (172 aa).

The helical transmembrane segment at 15–37 threads the bilayer; the sequence is ILATNLINLSAVLGVLIFFGKGV.

Belongs to the ATPase B chain family. F-type ATPases have 2 components, F(1) - the catalytic core - and F(0) - the membrane proton channel. F(1) has five subunits: alpha(3), beta(3), gamma(1), delta(1), epsilon(1). F(0) has four main subunits: a(1), b(1), b'(1) and c(10-14). The alpha and beta chains form an alternating ring which encloses part of the gamma chain. F(1) is attached to F(0) by a central stalk formed by the gamma and epsilon chains, while a peripheral stalk is formed by the delta, b and b' chains.

Its subcellular location is the plastid. It is found in the chloroplast thylakoid membrane. Functionally, f(1)F(0) ATP synthase produces ATP from ADP in the presence of a proton or sodium gradient. F-type ATPases consist of two structural domains, F(1) containing the extramembraneous catalytic core and F(0) containing the membrane proton channel, linked together by a central stalk and a peripheral stalk. During catalysis, ATP synthesis in the catalytic domain of F(1) is coupled via a rotary mechanism of the central stalk subunits to proton translocation. Component of the F(0) channel, it forms part of the peripheral stalk, linking F(1) to F(0). The chain is ATP synthase subunit b, chloroplastic from Pisum sativum (Garden pea).